The following is a 119-amino-acid chain: Large ribosomal subunit protein uL22 (119 aa).

Belongs to the universal ribosomal protein uL22 family. In terms of assembly, part of the 50S ribosomal subunit.

Functionally, this protein binds specifically to 23S rRNA; its binding is stimulated by other ribosomal proteins, e.g. L4, L17, and L20. It is important during the early stages of 50S assembly. It makes multiple contacts with different domains of the 23S rRNA in the assembled 50S subunit and ribosome. In terms of biological role, the globular domain of the protein is located near the polypeptide exit tunnel on the outside of the subunit, while an extended beta-hairpin is found that lines the wall of the exit tunnel in the center of the 70S ribosome. This chain is Large ribosomal subunit protein uL22, found in Rickettsia felis (strain ATCC VR-1525 / URRWXCal2) (Rickettsia azadi).